We begin with the raw amino-acid sequence, 337 residues long: 2-oxoglutarate-Fe(II) type oxidoreductase (337 aa).

The 104-residue stretch at 179 to 282 (AIATLRYLHY…RYSIPFFFTG (104 aa)) folds into the Fe2OG dioxygenase domain. The Fe cation site is built by H205, D207, and H263. R273 lines the 2-oxoglutarate pocket.

It belongs to the iron/ascorbate-dependent oxidoreductase family. Requires Fe(2+) as cofactor. In terms of tissue distribution, endocrocin is specifically produced in conidia.

Its pathway is secondary metabolite biosynthesis. Its function is as follows. 2-oxoglutarate-Fe(II) type oxidoreductase; part of the gene cluster that mediates the biosynthesis of endocrocin, a simple anthraquinone interesting for many biotechnological applications. The pathway begins with the synthesis of atrochrysone thioester by the polyketide synthase (PKS) encA. The atrochrysone carboxyl ACP thioesterase encB then breaks the thioester bond and releases the atrochrysone carboxylic acid from encA. The atrochrysone carboxylic acid is then converted to endocrocin anthrone which is further oxidized into endocrocin by encC. The exact function of encD has not been identified yet, but it negatively regulates endocrocin production, likely through the modification of endocrocin itself. This is 2-oxoglutarate-Fe(II) type oxidoreductase from Aspergillus fumigatus (strain ATCC MYA-4609 / CBS 101355 / FGSC A1100 / Af293) (Neosartorya fumigata).